The chain runs to 131 residues: Ribosome-binding factor A (131 aa).

Belongs to the RbfA family. As to quaternary structure, monomer. Binds 30S ribosomal subunits, but not 50S ribosomal subunits or 70S ribosomes.

The protein resides in the cytoplasm. Functionally, one of several proteins that assist in the late maturation steps of the functional core of the 30S ribosomal subunit. Associates with free 30S ribosomal subunits (but not with 30S subunits that are part of 70S ribosomes or polysomes). Required for efficient processing of 16S rRNA. May interact with the 5'-terminal helix region of 16S rRNA. The protein is Ribosome-binding factor A of Chromohalobacter salexigens (strain ATCC BAA-138 / DSM 3043 / CIP 106854 / NCIMB 13768 / 1H11).